We begin with the raw amino-acid sequence, 455 residues long: Bifunctional protein GlmU (455 aa).

Residues 1-225 form a pyrophosphorylase region; sequence MNIVILAAGM…EWETLGVNSK (225 aa). Residues 6–9, K20, Q71, 76–77, 98–100, G135, E150, N165, and N223 each bind UDP-N-acetyl-alpha-D-glucosamine; these read LAAG, GT, and YGD. A Mg(2+)-binding site is contributed by D100. Position 223 (N223) interacts with Mg(2+). Residues 226 to 246 are linker; it reads VQLAELERIHQRNLAQQLLED. The interval 247-455 is N-acetyltransferase; the sequence is GVTLIDPARI…QRPVKQKKEG (209 aa). Residues R329 and K347 each coordinate UDP-N-acetyl-alpha-D-glucosamine. Catalysis depends on H359, which acts as the Proton acceptor. Positions 362 and 373 each coordinate UDP-N-acetyl-alpha-D-glucosamine. Acetyl-CoA is bound by residues A376, 382–383, S401, A419, and R436; that span reads NY.

In the N-terminal section; belongs to the N-acetylglucosamine-1-phosphate uridyltransferase family. This sequence in the C-terminal section; belongs to the transferase hexapeptide repeat family. Homotrimer. Requires Mg(2+) as cofactor.

Its subcellular location is the cytoplasm. The enzyme catalyses alpha-D-glucosamine 1-phosphate + acetyl-CoA = N-acetyl-alpha-D-glucosamine 1-phosphate + CoA + H(+). It carries out the reaction N-acetyl-alpha-D-glucosamine 1-phosphate + UTP + H(+) = UDP-N-acetyl-alpha-D-glucosamine + diphosphate. It participates in nucleotide-sugar biosynthesis; UDP-N-acetyl-alpha-D-glucosamine biosynthesis; N-acetyl-alpha-D-glucosamine 1-phosphate from alpha-D-glucosamine 6-phosphate (route II): step 2/2. The protein operates within nucleotide-sugar biosynthesis; UDP-N-acetyl-alpha-D-glucosamine biosynthesis; UDP-N-acetyl-alpha-D-glucosamine from N-acetyl-alpha-D-glucosamine 1-phosphate: step 1/1. Its pathway is bacterial outer membrane biogenesis; LPS lipid A biosynthesis. Catalyzes the last two sequential reactions in the de novo biosynthetic pathway for UDP-N-acetylglucosamine (UDP-GlcNAc). The C-terminal domain catalyzes the transfer of acetyl group from acetyl coenzyme A to glucosamine-1-phosphate (GlcN-1-P) to produce N-acetylglucosamine-1-phosphate (GlcNAc-1-P), which is converted into UDP-GlcNAc by the transfer of uridine 5-monophosphate (from uridine 5-triphosphate), a reaction catalyzed by the N-terminal domain. The chain is Bifunctional protein GlmU from Ralstonia pickettii (strain 12J).